We begin with the raw amino-acid sequence, 505 residues long: Maturase K (505 aa).

This sequence belongs to the intron maturase 2 family. MatK subfamily.

Its subcellular location is the plastid. It localises to the chloroplast. Its function is as follows. Usually encoded in the trnK tRNA gene intron. Probably assists in splicing its own and other chloroplast group II introns. The chain is Maturase K from Nuphar advena (Common spatterdock).